The following is a 1080-amino-acid chain: Ubiquitin carboxyl-terminal hydrolase 8 (1080 aa).

The MIT domain occupies 33-116 (TKNYIHSAQK…ESLKLRYEEA (84 aa)). Over residues 119–173 (RKQLEEKDRREEEQLQQQKRQEMGREDSGAAAKRSVENLLDSKTKTQRINGEKSE) the composition is skewed to basic and acidic residues. The tract at residues 119-176 (RKQLEEKDRREEEQLQQQKRQEMGREDSGAAAKRSVENLLDSKTKTQRINGEKSEGAA) is disordered. Phosphoserine is present on Ser-160. The Rhodanese domain maps to 195–313 (KNTSLIIMDA…WLLCYPQFTT (119 aa)). A compositionally biased stretch (low complexity) spans 379-393 (ALAGPGAAPRAEASP). Disordered stretches follow at residues 379–455 (ALAG…TDEE), 468–605 (EKNK…RSEE), and 642–710 (PPEM…KPPC). Ser-392 bears the Phosphoserine mark. The SH3-binding motif lies at 405–413 (PQVDRTKKP). Residues 417–427 (LPEDHRIKSEN) are compositionally biased toward basic and acidic residues. Residue Ser-446 is modified to Phosphoserine. 3 stretches are compositionally biased toward basic and acidic residues: residues 468 to 535 (EKNK…RELS), 549 to 577 (SKSE…KRPA), and 593 to 605 (AQRE…RSEE). Phosphothreonine is present on Thr-569. The span at 678 to 688 (SYSSPDITQAL) shows a compositional bias: polar residues. Residues Ser-680 and Ser-681 each carry the phosphoserine modification. The region spanning 739 to 1071 (TGLRNLGNTC…AAYILFYTSL (333 aa)) is the USP domain. Catalysis depends on Cys-748, which acts as the Nucleophile. A Phosphothreonine modification is found at Thr-907. The Proton acceptor role is filled by His-1029.

This sequence belongs to the peptidase C19 family. As to quaternary structure, forms a ternary complex with RNF128 and OTUB1. Interacts (via C-terminal UCH catalytic domain) with OTUB1 isoform 1. Interacts with STAM2 (via SH3 domain). Interacts with DNAJB3, EGFR, EPS15, RASGRF1, RNF41, YWHAE, YWHAG and YWHAZ. Interacts with NBR1, RASGRF1, RNF41 and IST1. Associates with the ESCRT-0 complex and with microtubules. Interacts with BIRC6/bruce and KIF23/MKLP1. Phosphorylation of Ser-680 is essential for interaction with YWHAE and for cytosol localization. Undergoes dephosphorylation at Ser-680 in the M phase. Tyrosine-phosphorylated in its N-terminal half in an EGFR-dependent manner. Post-translationally, ubiquitinated. Inactive form is mostly monoubiquitinated, but polyubiquitination happens too. Ubiquitination is increased in EGF-stimulated cells. Ubiquitination of active form is undetectable, suggesting a possibility that USP8 deubiquitinates itself, thereby regulating its own function. In terms of tissue distribution, highly expressed in testis. Expressed at intermediate level in brain.

The protein localises to the cytoplasm. It is found in the nucleus. The protein resides in the endosome membrane. Its subcellular location is the cell membrane. The enzyme catalyses Thiol-dependent hydrolysis of ester, thioester, amide, peptide and isopeptide bonds formed by the C-terminal Gly of ubiquitin (a 76-residue protein attached to proteins as an intracellular targeting signal).. Functionally, hydrolase that can remove conjugated ubiquitin from proteins and therefore plays an important regulatory role at the level of protein turnover by preventing degradation. Converts both 'Lys-48' an 'Lys-63'-linked ubiquitin chains. Catalytic activity is enhanced in the M phase. Involved in cell proliferation. Required to enter into S phase in response to serum stimulation. May regulate T-cell anergy mediated by RNF128 via the formation of a complex containing RNF128 and OTUB1. Probably regulates the stability of STAM2 and RASGRF1. Regulates endosomal ubiquitin dynamics, cargo sorting, membrane traffic at early endosomes, and maintenance of ESCRT-0 stability. The level of protein ubiquitination on endosomes is essential for maintaining the morphology of the organelle. Deubiquitinates EPS15 and controls tyrosine kinase stability. Removes conjugated ubiquitin from EGFR thus regulating EGFR degradation and downstream MAPK signaling. Involved in acrosome biogenesis through interaction with the spermatid ESCRT-0 complex and microtubules. Deubiquitinates BIRC6/bruce and KIF23/MKLP1. Deubiquitinates BACE1 which inhibits BACE1 lysosomal degradation and modulates BACE-mediated APP cleavage and amyloid-beta formation. The chain is Ubiquitin carboxyl-terminal hydrolase 8 from Mus musculus (Mouse).